We begin with the raw amino-acid sequence, 381 residues long: Mannitol-1-phosphate 5-dehydrogenase (381 aa).

Residue 3–14 (AVHFGAGNIGRG) participates in NAD(+) binding.

Belongs to the mannitol dehydrogenase family.

The enzyme catalyses D-mannitol 1-phosphate + NAD(+) = beta-D-fructose 6-phosphate + NADH + H(+). The sequence is that of Mannitol-1-phosphate 5-dehydrogenase from Photobacterium profundum (strain SS9).